The chain runs to 159 residues: MKKRKLSKKDWEIIKLLKKDARMSDAEIGRRIGLSKSAVRWRRINLQKRGYLLISAYLRFDKLGYTYAFVLVKIKPDTPRNEILKFKKALMENEHTFEIYEVLGDYNVLIGVFGEDVSELKRNIQELIIGQKCVQEYKVLLGAKSLKGLEVPFWDALED.

Residues 6 to 66 form the HTH asnC-type domain; it reads LSKKDWEIIK…YLRFDKLGYT (61 aa). A DNA-binding region (H-T-H motif) is located at residues 25 to 44; sequence DAEIGRRIGLSKSAVRWRRI.

This is an uncharacterized protein from Pyrococcus horikoshii (strain ATCC 700860 / DSM 12428 / JCM 9974 / NBRC 100139 / OT-3).